We begin with the raw amino-acid sequence, 477 residues long: Glycogen synthase (477 aa).

Position 15 (Lys-15) interacts with ADP-alpha-D-glucose.

The protein belongs to the glycosyltransferase 1 family. Bacterial/plant glycogen synthase subfamily.

It carries out the reaction [(1-&gt;4)-alpha-D-glucosyl](n) + ADP-alpha-D-glucose = [(1-&gt;4)-alpha-D-glucosyl](n+1) + ADP + H(+). Its pathway is glycan biosynthesis; glycogen biosynthesis. In terms of biological role, synthesizes alpha-1,4-glucan chains using ADP-glucose. This is Glycogen synthase from Edwardsiella ictaluri (strain 93-146).